A 49-amino-acid chain; its full sequence is Large ribosomal subunit protein bL33 (49 aa).

Belongs to the bacterial ribosomal protein bL33 family.

The sequence is that of Large ribosomal subunit protein bL33 from Clostridium botulinum (strain ATCC 19397 / Type A).